We begin with the raw amino-acid sequence, 210 residues long: T-cell surface glycoprotein CD8 beta chain (210 aa).

An N-terminal signal peptide occupies residues 1 to 21 (MRPRLWLLLAAQLTVLHGNSV). Positions 22-132 (LQQTPAYIKV…ELTFGKGTQL (111 aa)) constitute an Ig-like V-type domain. Topologically, residues 22-170 (LQQTPAYIKV…ETQKGPLCSP (149 aa)) are extracellular. The cysteines at positions 41 and 116 are disulfide-linked. Asparagine 102 carries an N-linked (GlcNAc...) asparagine glycan. The helical transmembrane segment at 171–191 (ITLGLLVAGVLVLLVSLGVAI) threads the bilayer. The Cytoplasmic portion of the chain corresponds to 192 to 210 (HLCCRRRRARLRFMKQFYK). At tyrosine 209 the chain carries Phosphotyrosine.

Forms disulfide-linked heterodimers with CD8A at the cell surface. Interacts with CD3D; this interaction couples TCR-CD3 with CD8. Interacts with LCK. Post-translationally, phosphorylated as a consequence of T-cell activation. In terms of processing, palmitoylated at the cytoplasmic tail and thereby targets the heterodimer CD8A/CD8B to lipid rafts unlike CD8A homodimers. Isoform 1, isoform 3, isoform 5, isoform 6, isoform 7 and isoform 8 are expressed in both thymus and peripheral CD8+ T-cells. Expression of isoform 1 is higher in thymus CD8+ T-cells than in peripheral CD8+ T-cells. Expression of isoform 6 is higher in peripheral CD8+ T-cells than in thymus CD8+ T-cells.

It is found in the cell membrane. It localises to the secreted. Its function is as follows. Integral membrane glycoprotein that plays an essential role in the immune response and serves multiple functions in responses against both external and internal offenses. In T-cells, functions primarily as a coreceptor for MHC class I molecule:peptide complex. The antigens presented by class I peptides are derived from cytosolic proteins while class II derived from extracellular proteins. Interacts simultaneously with the T-cell receptor (TCR) and the MHC class I proteins presented by antigen presenting cells (APCs). In turn, recruits the Src kinase LCK to the vicinity of the TCR-CD3 complex. A palmitoylation site in the cytoplasmic tail of CD8B chain contributes to partitioning of CD8 into the plasma membrane lipid rafts where signaling proteins are enriched. Once LCK recruited, it initiates different intracellular signaling pathways by phosphorylating various substrates ultimately leading to lymphokine production, motility, adhesion and activation of cytotoxic T-lymphocytes (CTLs). Additionally, plays a critical role in thymic selection of CD8+ T-cells. The polypeptide is T-cell surface glycoprotein CD8 beta chain (CD8B) (Homo sapiens (Human)).